The sequence spans 766 residues: General transcription and DNA repair factor IIH helicase/translocase subunit XPB2 (766 aa).

Residues 1-56 form a disordered region; that stretch reads MGNDERKRPTKKMKYGGKDDQKMKNIQNVEDYYDDADEDSRDGEGEEKRRDFTDLE. Residues 31–41 are compositionally biased toward acidic residues; that stretch reads DYYDDADEDSR. The segment covering 42 to 56 has biased composition (basic and acidic residues); sequence DGEGEEKRRDFTDLE. The 163-residue stretch at 293-455 folds into the Helicase ATP-binding domain; sequence MFGNGRARSG…DLNFLIGPKL (163 aa). 306-313 contributes to the ATP binding site; it reads LPCGAGKS. The DEVH box signature appears at 408–411; the sequence is DEVH. Residues 510-676 form the Helicase C-terminal domain; that stretch reads RACEFLIRFH…SLPPPDAGSS (167 aa). Polar residues predominate over residues 739–748; the sequence is SGRQKSGNQS. The disordered stretch occupies residues 739 to 766; sequence SGRQKSGNQSKKPKDPTKRHNIFKKRYV. A Nuclear localization signal motif is present at residues 749-765; that stretch reads KKPKDPTKRHNIFKKRY. Over residues 757–766 the composition is skewed to basic residues; it reads RHNIFKKRYV.

The protein belongs to the helicase family. RAD25/XPB subfamily. Component of the 7-subunit TFIIH core complex composed of XPB, XPD, TFB1/GTF2H1, GTF2H2/P44, TFB4/GTF2H3, TFB2/GTF2H4 and TFB5/GTF2H5, which is active in NER. The core complex associates with the 3-subunit CDK-activating kinase (CAK) module composed of CYCH1/cyclin H1, CDKD and MAT1/At4g30820 to form the 10-subunit holoenzyme (holo-TFIIH) active in transcription. As to expression, expressed ubiquitously.

It localises to the nucleus. It carries out the reaction Couples ATP hydrolysis with the unwinding of duplex DNA by translocating in the 3'-5' direction.. The enzyme catalyses ATP + H2O = ADP + phosphate + H(+). Functionally, ATP-dependent 3'-5' DNA helicase/translocase; binds dsDNA rather than ssDNA, unzipping it in a translocase rather than classical helicase activity. Component of the general transcription and DNA repair factor IIH (TFIIH) core complex. When complexed to CDK-activating kinase (CAK), involved in RNA transcription by RNA polymerase II. The ATPase activity of XPB/ERCC3, but not its helicase activity, is required for DNA opening; it may wrap around the damaged DNA wedging it open, causing localized melting and twisting that allows XPD/ERCC2 helicase to anchor. The ATP-dependent helicase activity of XPB/ERCC3 may be required for promoter escape. Also involved in transcription-coupled nucleotide excision repair (NER) of damaged DNA. In NER, TFIIH acts by opening DNA around the lesion to allow the excision of the damaged oligonucleotide and its replacement by a new DNA fragment. The structure of the TFIIH transcription complex differs from the NER-TFIIH complex. Partially complements UV sensitivity of a yeast SSL2 mutation. The sequence is that of General transcription and DNA repair factor IIH helicase/translocase subunit XPB2 (XPB2) from Arabidopsis thaliana (Mouse-ear cress).